Here is a 274-residue protein sequence, read N- to C-terminus: NH(3)-dependent NAD(+) synthetase (274 aa).

Residue 46–53 coordinates ATP; the sequence is GISGGQDS. Asp52 is a binding site for Mg(2+). Arg140 contributes to the deamido-NAD(+) binding site. Thr160 lines the ATP pocket. Glu165 contacts Mg(2+). The deamido-NAD(+) site is built by Lys173 and Asp180. Lys189 and Thr211 together coordinate ATP. Deamido-NAD(+) is bound at residue 260–261; sequence HK.

This sequence belongs to the NAD synthetase family. In terms of assembly, homodimer.

The catalysed reaction is deamido-NAD(+) + NH4(+) + ATP = AMP + diphosphate + NAD(+) + H(+). It functions in the pathway cofactor biosynthesis; NAD(+) biosynthesis; NAD(+) from deamido-NAD(+) (ammonia route): step 1/1. In terms of biological role, catalyzes the ATP-dependent amidation of deamido-NAD to form NAD. Uses ammonia as a nitrogen source. This chain is NH(3)-dependent NAD(+) synthetase, found in Listeria monocytogenes serotype 4b (strain CLIP80459).